The chain runs to 251 residues: Pyridoxine 5'-phosphate synthase (251 aa).

Asn-7 serves as a coordination point for 3-amino-2-oxopropyl phosphate. A 1-deoxy-D-xylulose 5-phosphate-binding site is contributed by 9 to 10; that stretch reads DH. A 3-amino-2-oxopropyl phosphate-binding site is contributed by Arg-18. Catalysis depends on His-43, which acts as the Proton acceptor. Residues Arg-45 and His-50 each contribute to the 1-deoxy-D-xylulose 5-phosphate site. The Proton acceptor role is filled by Glu-73. A 1-deoxy-D-xylulose 5-phosphate-binding site is contributed by Thr-103. Catalysis depends on His-197, which acts as the Proton donor. 3-amino-2-oxopropyl phosphate contacts are provided by residues Gly-198 and 219 to 220; that span reads GH.

This sequence belongs to the PNP synthase family. In terms of assembly, homooctamer; tetramer of dimers.

It localises to the cytoplasm. The catalysed reaction is 3-amino-2-oxopropyl phosphate + 1-deoxy-D-xylulose 5-phosphate = pyridoxine 5'-phosphate + phosphate + 2 H2O + H(+). Its pathway is cofactor biosynthesis; pyridoxine 5'-phosphate biosynthesis; pyridoxine 5'-phosphate from D-erythrose 4-phosphate: step 5/5. Functionally, catalyzes the complicated ring closure reaction between the two acyclic compounds 1-deoxy-D-xylulose-5-phosphate (DXP) and 3-amino-2-oxopropyl phosphate (1-amino-acetone-3-phosphate or AAP) to form pyridoxine 5'-phosphate (PNP) and inorganic phosphate. In Caulobacter sp. (strain K31), this protein is Pyridoxine 5'-phosphate synthase.